A 674-amino-acid chain; its full sequence is MESSTSSPQPPLSDPLDPFPQRSLEPGDIAVLVLYFLFVLAVGLWSTVKTKRDTVKGYFLAGGDMVWWPVGASLFASNVGSGHFVGLAGSGAATGISVAAYEFNGMFSVLMLAWIFLPIYIAGQVTTMPEYLRRRFGGSRIAITLAVLYLFIYIFTKISVDMYAGAIFIQQSLHLDLYLSVVGLLAVTALYTVAGGLAAVIYTDALQTLIMLVGALTLMGYSFAAVGGMEGLQEKYFLALPSNRSENSSCGLPREDAFHLFRDPLTSDLPWPGILFGMSIPSLWYWCTDQVIVQRSLAAKNLSHAKGGSLMAAYLKVLPLFIMVFPGMVSRILFPDQVACADPETCQRVCNNPSGCSDIAYPKLVLELLPTGLRGLMMAVMVAALMSSLTSIFNSASTIFTMDLWNHVRPRASEKELMIVGRVFVLLLVLVSVLWIPVVQASQGGQLFVYIQAISSYLQPPVAMVFVLGCFWKRANEKGAFWGLVLGLLLGFIRLILDFIYVEPACHQPDERPSVVKNVHYLYFSMILSSVTVLTVTVMSLLTEPPSKEMISHLTWFTRRDPVVQKAQVPAATPLPPALSHNGTAEANSASIQLETIQEGASKAHSSDVTPKQSRVVRALLWLCGMEGKSTEQAPRPAEPVLASIEENPVVKTLLDVNCLLCICCAFFLWGYFA.

The Extracellular portion of the chain corresponds to 1 to 27 (MESSTSSPQPPLSDPLDPFPQRSLEPG). Residues 28 to 48 (DIAVLVLYFLFVLAVGLWSTV) form a helical membrane-spanning segment. The Cytoplasmic portion of the chain corresponds to 49–56 (KTKRDTVK). Residues 57 to 77 (GYFLAGGDMVWWPVGASLFAS) form a helical membrane-spanning segment. Residues 78 to 102 (NVGSGHFVGLAGSGAATGISVAAYE) lie on the Extracellular side of the membrane. Residues 103 to 123 (FNGMFSVLMLAWIFLPIYIAG) traverse the membrane as a helical segment. Topologically, residues 124–140 (QVTTMPEYLRRRFGGSR) are cytoplasmic. A helical transmembrane segment spans residues 141–161 (IAITLAVLYLFIYIFTKISVD). At 162 to 180 (MYAGAIFIQQSLHLDLYLS) the chain is on the extracellular side. A helical transmembrane segment spans residues 181-201 (VVGLLAVTALYTVAGGLAAVI). Residues 202–208 (YTDALQT) lie on the Cytoplasmic side of the membrane. The helical transmembrane segment at 209–229 (LIMLVGALTLMGYSFAAVGGM) threads the bilayer. Over 230–272 (EGLQEKYFLALPSNRSENSSCGLPREDAFHLFRDPLTSDLPWP) the chain is Extracellular. A helical membrane pass occupies residues 273–293 (GILFGMSIPSLWYWCTDQVIV). Residues 294-308 (QRSLAAKNLSHAKGG) are Cytoplasmic-facing. The chain crosses the membrane as a helical span at residues 309–329 (SLMAAYLKVLPLFIMVFPGMV). Residues 330 to 375 (SRILFPDQVACADPETCQRVCNNPSGCSDIAYPKLVLELLPTGLRG) are Extracellular-facing. Residues 376–396 (LMMAVMVAALMSSLTSIFNSA) traverse the membrane as a helical segment. Residues 397–418 (STIFTMDLWNHVRPRASEKELM) lie on the Cytoplasmic side of the membrane. The chain crosses the membrane as a helical span at residues 419–439 (IVGRVFVLLLVLVSVLWIPVV). Over 440–446 (QASQGGQ) the chain is Extracellular. The chain crosses the membrane as a helical span at residues 447-467 (LFVYIQAISSYLQPPVAMVFV). The Cytoplasmic segment spans residues 468–479 (LGCFWKRANEKG). A helical transmembrane segment spans residues 480 to 500 (AFWGLVLGLLLGFIRLILDFI). Topologically, residues 501-521 (YVEPACHQPDERPSVVKNVHY) are extracellular. Residues 522–542 (LYFSMILSSVTVLTVTVMSLL) traverse the membrane as a helical segment. Residues 543-653 (TEPPSKEMIS…SIEENPVVKT (111 aa)) lie on the Cytoplasmic side of the membrane. A helical membrane pass occupies residues 654–674 (LLDVNCLLCICCAFFLWGYFA).

Belongs to the sodium:solute symporter (SSF) (TC 2.A.21) family. Expressed in brain, lung and kidney. In the kidney, strongly expressed in the cortex, at the luminal side of proximal convoluted tubules and in BBMVs. Weaker expression observed in the medulla (at protein level).

Its subcellular location is the membrane. It is found in the apical cell membrane. It catalyses the reaction myo-inositol(out) + 2 Na(+)(out) = myo-inositol(in) + 2 Na(+)(in). It carries out the reaction 1D-chiro-inositol(out) + 2 Na(+)(out) = 1D-chiro-inositol(in) + 2 Na(+)(in). The catalysed reaction is D-glucose(out) + 2 Na(+)(out) = D-glucose(in) + 2 Na(+)(in). The enzyme catalyses D-xylose(out) + 2 Na(+)(out) = D-xylose(in) + 2 Na(+)(in). With respect to regulation, MI transport activity stimulated five-fold under 24 hour hypertonic shock conditions. MI inward currents were gradually inhibited as increasing amounts of phlorizin were added to the superfusion medium. When sodium is replaced by potassium, MI uptake is dramatically reduced and in the presence of L-fucose or D-chiro-inositol (DCI), the specific accumulation of tracer amounts of MI is also reduced. Functionally, involved in the sodium-dependent cotransport of myo-inositol (MI) with a Na(+):MI stoichiometry of 2:1. Exclusively responsible for apical MI transport and absorption in intestine. Can also transport D-chiro-inositol (DCI) but not L-fucose. Exhibits stereospecific cotransport of both D-glucose and D-xylose. May induce apoptosis through the TNF-alpha, PDCD1 pathway. May play a role in the regulation of MI concentration in serum, involving reabsorption in at least the proximal tubule of the kidney. The chain is Sodium/myo-inositol cotransporter 2 from Oryctolagus cuniculus (Rabbit).